Here is an 89-residue protein sequence, read N- to C-terminus: uncharacterized protein (89 aa).

A signal peptide spans 1 to 19 (MIVRTLLIAAALLGGTAQA).

It localises to the secreted. This is an uncharacterized protein from Pseudomonas aeruginosa (strain UCBPP-PA14).